A 313-amino-acid polypeptide reads, in one-letter code: Tagatose-6-phosphate kinase (313 aa).

This sequence belongs to the carbohydrate kinase PfkB family. LacC subfamily.

The catalysed reaction is D-tagatofuranose 6-phosphate + ATP = D-tagatofuranose 1,6-bisphosphate + ADP + H(+). Its pathway is carbohydrate metabolism; D-tagatose 6-phosphate degradation; D-glyceraldehyde 3-phosphate and glycerone phosphate from D-tagatose 6-phosphate: step 1/2. This is Tagatose-6-phosphate kinase from Enterococcus faecalis (strain ATCC 700802 / V583).